Reading from the N-terminus, the 290-residue chain is Nucleotide-binding protein FN1089 (290 aa).

11-18 (GLSGAGKT) contacts ATP. 56–59 (DIRT) contributes to the GTP binding site.

Belongs to the RapZ-like family.

Its function is as follows. Displays ATPase and GTPase activities. In Fusobacterium nucleatum subsp. nucleatum (strain ATCC 25586 / DSM 15643 / BCRC 10681 / CIP 101130 / JCM 8532 / KCTC 2640 / LMG 13131 / VPI 4355), this protein is Nucleotide-binding protein FN1089.